Consider the following 46-residue polypeptide: Esculentin-1GRa (46 aa).

As to expression, expressed by the skin glands.

Its subcellular location is the secreted. Functionally, antimicrobial peptide active against the Gram-positive bacterium S.aureus (MIC=12.5 uM) and against the Gram-negative bacterium E.coli (MIC=6 uM). Has no antifungal activity against C.albicans. Shows hemolytic activity against human erythrocytes only at high concentrations (LC(50)=210 uM). The polypeptide is Esculentin-1GRa (Odorrana grahami (Yunnanfu frog)).